A 338-amino-acid chain; its full sequence is NADPH dehydrogenase (338 aa).

22 to 25 (SPMC) is a binding site for FMN. Tyr27 lines the substrate pocket. Residues Ala59 and Gln101 each contribute to the FMN site. Position 163–166 (163–166 (HAAH)) interacts with substrate. FMN-binding positions include Arg214 and 306–307 (GR).

It belongs to the NADH:flavin oxidoreductase/NADH oxidase family. NamA subfamily. As to quaternary structure, homotetramer. The cofactor is FMN.

The catalysed reaction is A + NADPH + H(+) = AH2 + NADP(+). Its function is as follows. Catalyzes the reduction of the double bond of an array of alpha,beta-unsaturated aldehydes and ketones. It also reduces the nitro group of nitroester and nitroaromatic compounds. It could have a role in detoxification processes. In Listeria monocytogenes serovar 1/2a (strain ATCC BAA-679 / EGD-e), this protein is NADPH dehydrogenase.